Here is a 637-residue protein sequence, read N- to C-terminus: Neutral ceramidase (637 aa).

Histidine 34 contributes to the Mg(2+) binding site. Histidine 96 and histidine 204 together coordinate Zn(2+). Serine 256 (nucleophile) is an active-site residue. The Zn(2+) site is built by glutamate 417 and tyrosine 453. Residues aspartate 575, aspartate 577, and threonine 580 each contribute to the Mg(2+) site.

This sequence belongs to the neutral ceramidase family. Requires Zn(2+) as cofactor. The cofactor is Mg(2+).

It catalyses the reaction an N-acylsphing-4-enine + H2O = sphing-4-enine + a fatty acid. The enzyme catalyses an N-acylsphinganine + H2O = sphinganine + a fatty acid. It carries out the reaction an N-acyl-(4R)-4-hydroxysphinganine + H2O = (4R)-hydroxysphinganine + a fatty acid. The catalysed reaction is N-(9Z-octadecenoyl)-sphing-4-enine + H2O = sphing-4-enine + (9Z)-octadecenoate. It catalyses the reaction N-(hexanoyl)sphing-4-enine + H2O = hexanoate + sphing-4-enine. The enzyme catalyses N-hexadecanoylsphing-4-enine + H2O = sphing-4-enine + hexadecanoate. It carries out the reaction N-octadecanoylsphing-4-enine + H2O = sphing-4-enine + octadecanoate. The catalysed reaction is N-eicosanoyl-sphing-4-enine + H2O = eicosanoate + sphing-4-enine. It catalyses the reaction N-(15Z-tetracosenoyl)-sphing-4-enine + H2O = (15Z)-tetracosenoate + sphing-4-enine. The enzyme catalyses N-tetracosanoyl-sphing-4-enine + H2O = tetracosanoate + sphing-4-enine. 90% of activity is inhibited by nickel, zinc and calcium ions. Magnesium, cobalt, copper and manganese ions inhibit between 50 and 80% of activity. Its function is as follows. Catalyzes the cleavage of the N-acyl linkage of the ceramides (Cers) to yield sphingosine (Sph) and free fatty acid. Also catalyzes the synthesis of Cers from Sph and fatty acid. Cers containning C6-C24 fatty acids are well hydrolyzed, and Cers with mono unsaturated fatty acids are much more hydrolyzed than those with saturated fatty acids. This chain is Neutral ceramidase, found in Mycobacterium tuberculosis (strain ATCC 25618 / H37Rv).